The primary structure comprises 146 residues: Protein beta (146 aa).

The polypeptide is Protein beta (Adelaide River virus (ARV)).